The chain runs to 456 residues: Bifunctional protein GlmU (456 aa).

The interval 1 to 228 is pyrophosphorylase; it reads MTLPLHVLIL…PQDVEGANDP (228 aa). UDP-N-acetyl-alpha-D-glucosamine contacts are provided by residues 10 to 13, lysine 24, glutamine 76, 81 to 82, 103 to 105, glycine 138, glutamate 153, asparagine 168, and asparagine 226; these read LAAG, GT, and YGD. Residue aspartate 105 coordinates Mg(2+). Asparagine 226 contacts Mg(2+). The interval 229–249 is linker; the sequence is WQLAQLERAWQLRAARTLCLQ. Residues 250-456 are N-acetyltransferase; the sequence is GVRMADPARV…GWKRPTKKSP (207 aa). UDP-N-acetyl-alpha-D-glucosamine contacts are provided by arginine 332 and lysine 350. Histidine 362 (proton acceptor) is an active-site residue. UDP-N-acetyl-alpha-D-glucosamine is bound by residues tyrosine 365 and asparagine 376. Residues alanine 379, 385–386, serine 404, alanine 422, and arginine 439 contribute to the acetyl-CoA site; that span reads NY.

This sequence in the N-terminal section; belongs to the N-acetylglucosamine-1-phosphate uridyltransferase family. It in the C-terminal section; belongs to the transferase hexapeptide repeat family. Homotrimer. The cofactor is Mg(2+).

The protein localises to the cytoplasm. The catalysed reaction is alpha-D-glucosamine 1-phosphate + acetyl-CoA = N-acetyl-alpha-D-glucosamine 1-phosphate + CoA + H(+). It carries out the reaction N-acetyl-alpha-D-glucosamine 1-phosphate + UTP + H(+) = UDP-N-acetyl-alpha-D-glucosamine + diphosphate. It functions in the pathway nucleotide-sugar biosynthesis; UDP-N-acetyl-alpha-D-glucosamine biosynthesis; N-acetyl-alpha-D-glucosamine 1-phosphate from alpha-D-glucosamine 6-phosphate (route II): step 2/2. Its pathway is nucleotide-sugar biosynthesis; UDP-N-acetyl-alpha-D-glucosamine biosynthesis; UDP-N-acetyl-alpha-D-glucosamine from N-acetyl-alpha-D-glucosamine 1-phosphate: step 1/1. The protein operates within bacterial outer membrane biogenesis; LPS lipid A biosynthesis. Catalyzes the last two sequential reactions in the de novo biosynthetic pathway for UDP-N-acetylglucosamine (UDP-GlcNAc). The C-terminal domain catalyzes the transfer of acetyl group from acetyl coenzyme A to glucosamine-1-phosphate (GlcN-1-P) to produce N-acetylglucosamine-1-phosphate (GlcNAc-1-P), which is converted into UDP-GlcNAc by the transfer of uridine 5-monophosphate (from uridine 5-triphosphate), a reaction catalyzed by the N-terminal domain. The polypeptide is Bifunctional protein GlmU (Xanthomonas axonopodis pv. citri (strain 306)).